Here is a 276-residue protein sequence, read N- to C-terminus: uncharacterized protein (276 aa).

A propeptide spans 1–4 (MNRG) (leader sequence). An N-methylmethionine modification is found at M5. The helical transmembrane segment at 5–26 (MTLIELLVALALSIILSLGLYY) threads the bilayer.

It localises to the membrane. This is an uncharacterized protein from Aquifex aeolicus (strain VF5).